Here is a 20-residue protein sequence, read N- to C-terminus: Beta-1,3-glucan-binding protein 2 (20 aa).

This sequence belongs to the insect beta-1,3-glucan binding protein family. In terms of assembly, monomer.

The protein localises to the secreted. Functionally, involved in the recognition of invading microorganisms causing their aggregation. Activates the phenoloxidase cascade. Binds specifically to beta-1,3-glucan. Binds the A.niger cell wall component alpha-1,3-glucan, a fungal pathogen-associated molecular pattern (PAMP) that activates the host immune response. The protein is Beta-1,3-glucan-binding protein 2 of Galleria mellonella (Greater wax moth).